Reading from the N-terminus, the 233-residue chain is Biosynthetic peptidoglycan transglycosylase (233 aa).

The helical transmembrane segment at 8–28 threads the bilayer; it reads LIALPVGIFIFFNAYVYGNII.

Belongs to the glycosyltransferase 51 family.

The protein resides in the cell inner membrane. The enzyme catalyses [GlcNAc-(1-&gt;4)-Mur2Ac(oyl-L-Ala-gamma-D-Glu-L-Lys-D-Ala-D-Ala)](n)-di-trans,octa-cis-undecaprenyl diphosphate + beta-D-GlcNAc-(1-&gt;4)-Mur2Ac(oyl-L-Ala-gamma-D-Glu-L-Lys-D-Ala-D-Ala)-di-trans,octa-cis-undecaprenyl diphosphate = [GlcNAc-(1-&gt;4)-Mur2Ac(oyl-L-Ala-gamma-D-Glu-L-Lys-D-Ala-D-Ala)](n+1)-di-trans,octa-cis-undecaprenyl diphosphate + di-trans,octa-cis-undecaprenyl diphosphate + H(+). The protein operates within cell wall biogenesis; peptidoglycan biosynthesis. In terms of biological role, peptidoglycan polymerase that catalyzes glycan chain elongation from lipid-linked precursors. This Neisseria gonorrhoeae (strain NCCP11945) protein is Biosynthetic peptidoglycan transglycosylase.